A 347-amino-acid polypeptide reads, in one-letter code: Phosphoribosylformylglycinamidine cyclo-ligase (347 aa).

The protein belongs to the AIR synthase family.

It is found in the cytoplasm. It catalyses the reaction 2-formamido-N(1)-(5-O-phospho-beta-D-ribosyl)acetamidine + ATP = 5-amino-1-(5-phospho-beta-D-ribosyl)imidazole + ADP + phosphate + H(+). Its pathway is purine metabolism; IMP biosynthesis via de novo pathway; 5-amino-1-(5-phospho-D-ribosyl)imidazole from N(2)-formyl-N(1)-(5-phospho-D-ribosyl)glycinamide: step 2/2. This Prochlorococcus marinus subsp. pastoris (strain CCMP1986 / NIES-2087 / MED4) protein is Phosphoribosylformylglycinamidine cyclo-ligase.